The primary structure comprises 79 residues: MLVLTRKIGEAVTIGDQIRIMVVEVKGNQVRLGIEAPQDMRIYREEIYLQVQEENRHAADWNLTDLENAVSLLGSGDKE.

The protein belongs to the CsrA/RsmA family. As to quaternary structure, homodimer; the beta-strands of each monomer intercalate to form a hydrophobic core, while the alpha-helices form wings that extend away from the core.

The protein resides in the cytoplasm. A translational regulator that binds mRNA to regulate translation initiation and/or mRNA stability. Usually binds in the 5'-UTR at or near the Shine-Dalgarno sequence preventing ribosome-binding, thus repressing translation. Its main target seems to be the major flagellin gene, while its function is anatagonized by FliW. This is Translational regulator CsrA from Geotalea uraniireducens (strain Rf4) (Geobacter uraniireducens).